A 288-amino-acid chain; its full sequence is ATP synthase gamma chain (288 aa).

This sequence belongs to the ATPase gamma chain family. As to quaternary structure, F-type ATPases have 2 components, CF(1) - the catalytic core - and CF(0) - the membrane proton channel. CF(1) has five subunits: alpha(3), beta(3), gamma(1), delta(1), epsilon(1). CF(0) has three main subunits: a, b and c.

The protein localises to the cell inner membrane. Produces ATP from ADP in the presence of a proton gradient across the membrane. The gamma chain is believed to be important in regulating ATPase activity and the flow of protons through the CF(0) complex. The sequence is that of ATP synthase gamma chain from Rickettsia felis (strain ATCC VR-1525 / URRWXCal2) (Rickettsia azadi).